Consider the following 166-residue polypeptide: Fer3-like protein (166 aa).

The disordered stretch occupies residues 57-88 (FEEGDPEEEECEVDQGDGEEEEEEERGRGVSL). Residues 60 to 80 (GDPEEEECEVDQGDGEEEEEE) are compositionally biased toward acidic residues. In terms of domain architecture, bHLH spans 101 to 153 (AQRQAANIRERKRMFNLNEAFDQLRRKVPTFAYEKRLSRIETLRLAIVYISFM).

Heterodimer with TCF3/E12. Interacts with the bHLH domain of TCF3/E12.

It localises to the nucleus. Functionally, transcription factor that binds to the E-box and functions as inhibitor of transcription. DNA binding requires dimerization with an E protein. Inhibits transcription activation by ASCL1/MASH1 by sequestering E proteins. This is Fer3-like protein (FERD3L) from Homo sapiens (Human).